Here is a 72-residue protein sequence, read N- to C-terminus: Putative transmembrane protein DDB_G0272126 (72 aa).

Transmembrane regions (helical) follow at residues 6 to 26 (KIIK…NTII) and 38 to 58 (IILV…IFYG).

It is found in the membrane. The sequence is that of Putative transmembrane protein DDB_G0272126 from Dictyostelium discoideum (Social amoeba).